The primary structure comprises 216 residues: FMN-dependent NADH:quinone oxidoreductase 2 (216 aa).

Residues Ser-9, Ser-15–Ser-17, Met-96–Phe-99, and Ser-140–Gly-143 each bind FMN.

The protein belongs to the azoreductase type 1 family. Homodimer. Requires FMN as cofactor.

The enzyme catalyses 2 a quinone + NADH + H(+) = 2 a 1,4-benzosemiquinone + NAD(+). It catalyses the reaction N,N-dimethyl-1,4-phenylenediamine + anthranilate + 2 NAD(+) = 2-(4-dimethylaminophenyl)diazenylbenzoate + 2 NADH + 2 H(+). Quinone reductase that provides resistance to thiol-specific stress caused by electrophilic quinones. Functionally, also exhibits azoreductase activity. Catalyzes the reductive cleavage of the azo bond in aromatic azo compounds to the corresponding amines. This chain is FMN-dependent NADH:quinone oxidoreductase 2, found in Xanthomonas axonopodis pv. citri (strain 306).